The following is a 5263-amino-acid chain: Fibroin heavy chain (5263 aa).

Residues 1-21 (MRVKTFVILCCALQYVAYTNA) form the signal peptide. The tract at residues 149–5206 (AAVGAGAGAG…GSGAGAGGSV (5058 aa)) is highly repetitive. C5260 and C5263 are oxidised to a cystine.

In terms of assembly, silk fibroin elementary unit consists in a disulfide-linked heavy and light chain and a p25 glycoprotein in molar ratios of 6:6:1. This results in a complex of approximately 2.3 MDa. Post-translationally, the interchain disulfide bridge is essential for the intracellular transport and secretion of fibroin. Produced exclusively in the posterior (PSG) section of silk glands, which are essentially modified salivary glands.

Core component of the silk filament; a strong, insoluble and chemically inert fiber. The polypeptide is Fibroin heavy chain (FIBH) (Bombyx mori (Silk moth)).